A 192-amino-acid chain; its full sequence is Large ribosomal subunit protein bL25 (192 aa).

Belongs to the bacterial ribosomal protein bL25 family. CTC subfamily. In terms of assembly, part of the 50S ribosomal subunit; part of the 5S rRNA/L5/L18/L25 subcomplex. Contacts the 5S rRNA. Binds to the 5S rRNA independently of L5 and L18.

Functionally, this is one of the proteins that binds to the 5S RNA in the ribosome where it forms part of the central protuberance. The protein is Large ribosomal subunit protein bL25 of Cytophaga hutchinsonii (strain ATCC 33406 / DSM 1761 / CIP 103989 / NBRC 15051 / NCIMB 9469 / D465).